The following is a 370-amino-acid chain: Binary larvicide subunit BinA (370 aa).

A propeptide spanning residues M1–F6 is cleaved from the precursor. The beta-trefoil domain stretch occupies residues M1–L155. Cysteines 31 and 47 form a disulfide. Positions T156–N370 are pore-forming domain.

Belongs to the toxin_10 family. Forms a heterodimer with BinB. In terms of processing, processed by proteases in the mosquito gut, probably at both the N- and C-termini.

It is found in the spore. It localises to the perispore. Its function is as follows. Component of a binary toxin active against Culex and some Aedes mosquito larvae; mortality towards both C.quinquefasciatus and A.atropalpus is maximal by 48 hours. A.aegypti is not very susceptible to this toxin. Binary toxin internalization into host gut cells requires both proteins. The protein is Binary larvicide subunit BinA (binA) of Lysinibacillus sphaericus (Bacillus sphaericus).